The chain runs to 827 residues: Tuftelin-interacting protein 11 (827 aa).

2 disordered regions span residues 31–129 and 179–203; these read FNPH…KGFV and QRKG…DFPV. Positions 41–60 are enriched in basic and acidic residues; sequence TKEEATYGVWAERDSDEERP. A compositionally biased stretch (acidic residues) spans 88 to 98; it reads DVSDEDSDEDE. Residues 99–112 are compositionally biased toward basic and acidic residues; it reads KPVKQEEIPKEFVP. The G-patch domain occupies 145-191; that stretch reads TKGIGQKLLQKMGYVPGRGLGKNAQGIINPIEAKQRKGKGAVGAYGS.

Belongs to the TFP11/STIP family. In terms of assembly, identified in the spliceosome C complex.

Its subcellular location is the nucleus. Involved in pre-mRNA splicing, specifically in spliceosome disassembly during late-stage splicing events. This is Tuftelin-interacting protein 11 (TFIP11) from Gallus gallus (Chicken).